The following is a 163-amino-acid chain: Nucleotide-binding protein SYNPCC7002_A1983 (163 aa).

This sequence belongs to the YajQ family.

Its function is as follows. Nucleotide-binding protein. The protein is Nucleotide-binding protein SYNPCC7002_A1983 of Picosynechococcus sp. (strain ATCC 27264 / PCC 7002 / PR-6) (Agmenellum quadruplicatum).